The chain runs to 308 residues: MKKKHVAVLMGGFSSERPVSLSSGNSCADALEAEGYRVSRVDVSRDVSRVLSELKPDVAFNALHGPFGEDGTVQGVLEYLGIPYTHSGVLASALAMDKDLAKTVAKSAGIPVASSRVMNRFEIGDKHPMEPPYVVKPVAEGSSFGVVIVREGQSHPPQVLGSAEWGYGERVMVERYIPGRELTCAVMGDRVLGVCEIVPVGHSFYDYDSKYAPGGSRHVCPAEISPNIYQKIERLALKAHQAIGCRGVSRSDFRYDDRLPGEEGIVWLEINTQPGMTPTSLVPDIAAQAGIGFGALLSWMVEDASCPR.

The ATP-grasp domain maps to 102–302 (KTVAKSAGIP…FGALLSWMVE (201 aa)). Residue 128 to 183 (PMEPPYVVKPVAEGSSFGVVIVREGQSHPPQVLGSAEWGYGERVMVERYIPGRELT) participates in ATP binding. The Mg(2+) site is built by Asp-252, Glu-269, and Asn-271.

The protein belongs to the D-alanine--D-alanine ligase family. Requires Mg(2+) as cofactor. Mn(2+) serves as cofactor.

The protein localises to the cytoplasm. It catalyses the reaction 2 D-alanine + ATP = D-alanyl-D-alanine + ADP + phosphate + H(+). It functions in the pathway cell wall biogenesis; peptidoglycan biosynthesis. In terms of biological role, cell wall formation. This is D-alanine--D-alanine ligase from Chelativorans sp. (strain BNC1).